We begin with the raw amino-acid sequence, 237 residues long: Ribonuclease 3 (237 aa).

The 130-residue stretch at 4–133 folds into the RNase III domain; it reads LTELENSLGV…VLAAIYIDKG (130 aa). Glu46 contributes to the Mg(2+) binding site. Active-site residues include Asp50 and Glu122. A Mg(2+)-binding site is contributed by Glu122. Positions 160–229 constitute a DRBM domain; sequence DYKSRLQELI…AKVALQQFEN (70 aa).

Belongs to the ribonuclease III family. In terms of assembly, homodimer. It depends on Mg(2+) as a cofactor.

The protein localises to the cytoplasm. It catalyses the reaction Endonucleolytic cleavage to 5'-phosphomonoester.. Its function is as follows. Digests double-stranded RNA. Involved in the processing of primary rRNA transcript to yield the immediate precursors to the large and small rRNAs (23S and 16S). Processes some mRNAs, and tRNAs when they are encoded in the rRNA operon. Processes pre-crRNA and tracrRNA of type II CRISPR loci if present in the organism. This chain is Ribonuclease 3, found in Dehalococcoides mccartyi (strain CBDB1).